The chain runs to 628 residues: MALVSAVPLDSRLCLCRTLFGLTHELKAIRRTIPNLGMCRGGKSIAPSMSMSSTTFVSSEDGVPRRIGGHHSNLWDDDSIDSLSTSYEAPSYRERADRLIGEVKDMFHLISVEDGVSTSPLNDLHHRLWMVDSVERLGIDRHFKNETNAGLDHVYSYWTEKGIGRGRESGATDLNSTALGLRTLRLHGYMVSSHVLDHFKNEKGQFTCSAIQTEGEIRDVLNLFRASLIAFPGEKIMDAAEIFSTMYLKDALQKIPPSGLSQEIEYLLEFGWHTNLPRMETRMYIDVFGEDTTFETPYLIRERLLELAKLEFNIFHSLVKRELQSLSRWWKDYGFPEITFSRHRHVEYYTLAACIANDPKHSAFRLGFAKICHMVTILDDIYDTFGTMEELELLTAAFKRWDPSSIECLPDYMKGVYMAVYDNINETAREAQKIQGWDIVSYARKSWEALFDAHMQEAKWISSGYLPTFEEYLENGKVSFGSRLTTLEPMLTLGFPLPPRILQEIDFPSNFNELICAILRLRGDTQCYKADRARGEEASSVSCYMKDHPGITEEDAVNQINALVNNLTKELNSELLRPDSGVPISYKKFYFDIWRVFHYGYKYRDGFSVASIEIKNLVTITVVETVPL.

The Mg(2+) site is built by Asp-379, Asp-383, and Asp-531. A DDXXD motif motif is present at residues 379–383; sequence DDIYD.

This sequence belongs to the terpene synthase family. Tpsd subfamily. Mg(2+) is required as a cofactor. Mn(2+) serves as cofactor.

Its subcellular location is the plastid. It is found in the chloroplast. It participates in terpene metabolism; oleoresin biosynthesis. It functions in the pathway secondary metabolite biosynthesis; terpenoid biosynthesis. Monoterpene synthase (TPS) involved in the biosynthesis of monoterpene natural products included in conifer oleoresin secretions and volatile emissions; these compounds contribute to biotic and abiotic stress defense against herbivores and pathogens. This chain is Monoterpene synthase like 2, chloroplastic, found in Pinus banksiana (Jack pine).